Reading from the N-terminus, the 986-residue chain is Bifunctional glutamine synthetase adenylyltransferase/adenylyl-removing enzyme (986 aa).

The adenylyl removase stretch occupies residues 1-475; the sequence is MSFPLAHVDA…VFDHLIGEEK (475 aa). The segment at 481–986 is adenylyl transferase; that stretch reads TETLWHDFLE…LFEHNDKYEE (506 aa).

This sequence belongs to the GlnE family. The cofactor is Mg(2+).

It carries out the reaction [glutamine synthetase]-O(4)-(5'-adenylyl)-L-tyrosine + phosphate = [glutamine synthetase]-L-tyrosine + ADP. The catalysed reaction is [glutamine synthetase]-L-tyrosine + ATP = [glutamine synthetase]-O(4)-(5'-adenylyl)-L-tyrosine + diphosphate. In terms of biological role, involved in the regulation of glutamine synthetase GlnA, a key enzyme in the process to assimilate ammonia. When cellular nitrogen levels are high, the C-terminal adenylyl transferase (AT) inactivates GlnA by covalent transfer of an adenylyl group from ATP to specific tyrosine residue of GlnA, thus reducing its activity. Conversely, when nitrogen levels are low, the N-terminal adenylyl removase (AR) activates GlnA by removing the adenylyl group by phosphorolysis, increasing its activity. The regulatory region of GlnE binds the signal transduction protein PII (GlnB) which indicates the nitrogen status of the cell. The polypeptide is Bifunctional glutamine synthetase adenylyltransferase/adenylyl-removing enzyme (Pasteurella multocida (strain Pm70)).